A 405-amino-acid polypeptide reads, in one-letter code: Corticosteroid-binding globulin (405 aa).

The first 22 residues, 1–22 (MPLLLYTCLLWLPTSGLWTVQA), serve as a signal peptide directing secretion. Residues Asn31, Asn96, and Asn176 are each glycosylated (N-linked (GlcNAc...) asparagine). Residue Gln254 participates in cortisol binding. Asn260 carries N-linked (GlcNAc...) asparagine glycosylation. Asn286 serves as a coordination point for cortisol. 2 N-linked (GlcNAc...) asparagine glycosylation sites follow: Asn330 and Asn369. Cortisol is bound by residues His390 and Trp393.

It belongs to the serpin family. In terms of processing, N-glycosylated; binds 5 oligosaccharide chains. Glycosylation in position Asn-260 is needed for steroid binding. In terms of tissue distribution, plasma; synthesized in liver. Has also been identified in a number of glycocorticoid responsive cells.

Its subcellular location is the secreted. Major transport protein for glucocorticoids and progestins in the blood of almost all vertebrate species. The sequence is that of Corticosteroid-binding globulin (SERPINA6) from Homo sapiens (Human).